The primary structure comprises 37 residues: Large ribosomal subunit protein bL36c (37 aa).

The protein belongs to the bacterial ribosomal protein bL36 family.

It is found in the plastid. It localises to the chloroplast. This chain is Large ribosomal subunit protein bL36c, found in Ostreococcus tauri.